The primary structure comprises 197 residues: Fe/S biogenesis protein NfuA (197 aa).

Residues C155 and C158 each coordinate [4Fe-4S] cluster.

Belongs to the NfuA family. Homodimer. It depends on [4Fe-4S] cluster as a cofactor.

Its function is as follows. Involved in iron-sulfur cluster biogenesis. Binds a 4Fe-4S cluster, can transfer this cluster to apoproteins, and thereby intervenes in the maturation of Fe/S proteins. Could also act as a scaffold/chaperone for damaged Fe/S proteins. In Pseudomonas savastanoi pv. phaseolicola (strain 1448A / Race 6) (Pseudomonas syringae pv. phaseolicola (strain 1448A / Race 6)), this protein is Fe/S biogenesis protein NfuA.